A 131-amino-acid polypeptide reads, in one-letter code: Histone H2A type 1-A (131 aa).

Residues 1 to 23 (MSGRGKQGGKARAKSKSRSSRAG) are disordered. An N-acetylserine modification is found at serine 2. Serine 2 is subject to Phosphoserine; by RPS6KA5. Position 4 is a citrulline; alternate (arginine 4). Position 4 is a symmetric dimethylarginine; by PRMT5; alternate (arginine 4). An N6-(2-hydroxyisobutyryl)lysine modification is found at lysine 6. The segment covering 7–19 (QGGKARAKSKSRS) has biased composition (basic residues). Lysine 10 carries the N6-(2-hydroxyisobutyryl)lysine; alternate modification. Residue lysine 10 is modified to N6-(beta-hydroxybutyryl)lysine; alternate. Lysine 10 bears the N6-lactoyllysine; alternate mark. Lysine 10 is subject to N6-succinyllysine; alternate. Lysine 14 carries the post-translational modification N6-(beta-hydroxybutyryl)lysine. Residues lysine 14 and lysine 16 each participate in a glycyl lysine isopeptide (Lys-Gly) (interchain with G-Cter in ubiquitin) cross-link. Lysine 37 is subject to N6-(2-hydroxyisobutyryl)lysine; alternate. Lysine 37 carries the post-translational modification N6-(beta-hydroxybutyryl)lysine; alternate. At lysine 37 the chain carries N6-crotonyllysine; alternate. 2 positions are modified to N6-(2-hydroxyisobutyryl)lysine: lysine 75 and lysine 76. Lysine 96 is subject to N6-(2-hydroxyisobutyryl)lysine; alternate. Residue lysine 96 is modified to N6-(beta-hydroxybutyryl)lysine; alternate. Residue lysine 96 is modified to N6-succinyllysine; alternate. Lysine 96 bears the N6-glutaryllysine; alternate mark. Glutamine 105 carries the N5-methylglutamine modification. The residue at position 119 (lysine 119) is an N6-(2-hydroxyisobutyryl)lysine; alternate. Lysine 119 carries the post-translational modification N6-(beta-hydroxybutyryl)lysine; alternate. N6-crotonyllysine; alternate is present on residues lysine 119 and lysine 120. Lysine 119 and lysine 120 each carry N6-glutaryllysine; alternate. Residue lysine 120 forms a Glycyl lysine isopeptide (Lys-Gly) (interchain with G-Cter in ubiquitin); alternate linkage. Threonine 121 is modified (phosphothreonine; by DCAF1). Lysine 127 is subject to N6-crotonyllysine.

It belongs to the histone H2A family. In terms of assembly, the nucleosome is a histone octamer containing two molecules each of H2A, H2B, H3 and H4 assembled in one H3-H4 heterotetramer and two H2A-H2B heterodimers. The octamer wraps approximately 147 bp of DNA. Deiminated on Arg-4 in granulocytes upon calcium entry. Post-translationally, monoubiquitination of Lys-120 (H2AK119Ub) by RING1, TRIM37 and RNF2/RING2 complex gives a specific tag for epigenetic transcriptional repression and participates in X chromosome inactivation of female mammals. It is involved in the initiation of both imprinted and random X inactivation. Ubiquitinated H2A is enriched in inactive X chromosome chromatin. Ubiquitination of H2A functions downstream of methylation of 'Lys-27' of histone H3 (H3K27me). H2AK119Ub by RNF2/RING2 can also be induced by ultraviolet and may be involved in DNA repair. Monoubiquitination of Lys-120 (H2AK119Ub) by TRIM37 may promote transformation of cells in a number of breast cancers. Following DNA double-strand breaks (DSBs), it is ubiquitinated through 'Lys-63' linkage of ubiquitin moieties by the E2 ligase UBE2N and the E3 ligases RNF8 and RNF168, leading to the recruitment of repair proteins to sites of DNA damage. Ubiquitination at Lys-14 and Lys-16 (H2AK13Ub and H2AK15Ub, respectively) in response to DNA damage is initiated by RNF168 that mediates monoubiquitination at these 2 sites, and 'Lys-63'-linked ubiquitin are then conjugated to monoubiquitin; RNF8 is able to extend 'Lys-63'-linked ubiquitin chains in vitro. Deubiquitinated by USP51 at Lys-14 and Lys-16 (H2AK13Ub and H2AK15Ub, respectively) after damaged DNA is repaired. H2AK119Ub and ionizing radiation-induced 'Lys-63'-linked ubiquitination (H2AK13Ub and H2AK15Ub) are distinct events. In terms of processing, phosphorylation on Ser-2 (H2AS1ph) is enhanced during mitosis. Phosphorylation on Ser-2 by RPS6KA5/MSK1 directly represses transcription. Acetylation of H3 inhibits Ser-2 phosphorylation by RPS6KA5/MSK1. Phosphorylation at Thr-121 (H2AT120ph) by DCAF1 is present in the regulatory region of many tumor suppresor genes and down-regulates their transcription. Glutamine methylation at Gln-105 (H2AQ104me) by FBL is specifically dedicated to polymerase I. It is present at 35S ribosomal DNA locus and impairs binding of the FACT complex. Post-translationally, symmetric dimethylation on Arg-4 by the PRDM1/PRMT5 complex may play a crucial role in the germ-cell lineage. In terms of processing, crotonylation (Kcr) is specifically present in male germ cells and marks testis-specific genes in post-meiotic cells, including X-linked genes that escape sex chromosome inactivation in haploid cells. Crotonylation marks active promoters and enhancers and confers resistance to transcriptional repressors. It is also associated with post-meiotically activated genes on autosomes. Lactylated in macrophages by EP300/P300 by using lactoyl-CoA directly derived from endogenous or exogenous lactate, leading to stimulates gene transcription.

Its subcellular location is the nucleus. The protein resides in the chromosome. In terms of biological role, core component of nucleosome. Nucleosomes wrap and compact DNA into chromatin, limiting DNA accessibility to the cellular machineries which require DNA as a template. Histones thereby play a central role in transcription regulation, DNA repair, DNA replication and chromosomal stability. DNA accessibility is regulated via a complex set of post-translational modifications of histones, also called histone code, and nucleosome remodeling. This Homo sapiens (Human) protein is Histone H2A type 1-A.